The sequence spans 145 residues: 3-hydroxyacyl-[acyl-carrier-protein] dehydratase FabZ (145 aa).

Residue H47 is part of the active site.

It belongs to the thioester dehydratase family. FabZ subfamily.

It is found in the cytoplasm. It catalyses the reaction a (3R)-hydroxyacyl-[ACP] = a (2E)-enoyl-[ACP] + H2O. Involved in unsaturated fatty acids biosynthesis. Catalyzes the dehydration of short chain beta-hydroxyacyl-ACPs and long chain saturated and unsaturated beta-hydroxyacyl-ACPs. The protein is 3-hydroxyacyl-[acyl-carrier-protein] dehydratase FabZ of Chromohalobacter salexigens (strain ATCC BAA-138 / DSM 3043 / CIP 106854 / NCIMB 13768 / 1H11).